We begin with the raw amino-acid sequence, 54 residues long: Large ribosomal subunit protein bL33 (54 aa).

It belongs to the bacterial ribosomal protein bL33 family.

This Herpetosiphon aurantiacus (strain ATCC 23779 / DSM 785 / 114-95) protein is Large ribosomal subunit protein bL33.